We begin with the raw amino-acid sequence, 396 residues long: Na(+)/H(+) antiporter NhaA 1 (396 aa).

Helical transmembrane passes span 15–35 (AGIF…VGFL), 60–80 (LEFW…GLEL), 96–116 (FLPS…FAVI), 126–146 (GWAI…ALLG), 155–175 (IFVL…IALF), 179–199 (ALNF…LVMC), 207–227 (IPFV…GIHA), 255–275 (SLGY…NAGV), 290–312 (PLGV…SWFL), 329–349 (LYAV…VDNL), and 363–383 (LAIL…AKAV).

Belongs to the NhaA Na(+)/H(+) (TC 2.A.33) antiporter family.

The protein localises to the cell inner membrane. The catalysed reaction is Na(+)(in) + 2 H(+)(out) = Na(+)(out) + 2 H(+)(in). In terms of biological role, na(+)/H(+) antiporter that extrudes sodium in exchange for external protons. This Campylobacter hominis (strain ATCC BAA-381 / DSM 21671 / CCUG 45161 / LMG 19568 / NCTC 13146 / CH001A) protein is Na(+)/H(+) antiporter NhaA 1.